The sequence spans 46 residues: Photosystem II reaction center protein K (46 aa).

Residues 1–9 (MLILLNTFA) constitute a propeptide that is removed on maturation. The helical transmembrane segment at 25 to 45 (LPLIPLFFFLLVFVWQAAVGF) threads the bilayer.

Belongs to the PsbK family. As to quaternary structure, PSII is composed of 1 copy each of membrane proteins PsbA, PsbB, PsbC, PsbD, PsbE, PsbF, PsbH, PsbI, PsbJ, PsbK, PsbL, PsbM, PsbT, PsbX, PsbY, Psb30/Ycf12, peripheral proteins PsbO, CyanoQ (PsbQ), PsbU, PsbV and a large number of cofactors. It forms dimeric complexes.

Its subcellular location is the cellular thylakoid membrane. One of the components of the core complex of photosystem II (PSII). PSII is a light-driven water:plastoquinone oxidoreductase that uses light energy to abstract electrons from H(2)O, generating O(2) and a proton gradient subsequently used for ATP formation. It consists of a core antenna complex that captures photons, and an electron transfer chain that converts photonic excitation into a charge separation. The chain is Photosystem II reaction center protein K from Prochlorococcus marinus (strain MIT 9215).